The sequence spans 338 residues: Large ribosomal subunit protein uL3 (338 aa).

A disordered region spans residues 230–253; it reads HRKGHRRTGTIGPQAPALMFTQPR.

Belongs to the universal ribosomal protein uL3 family. Part of the 50S ribosomal subunit. Forms a cluster with proteins L14 and L24e.

Functionally, one of the primary rRNA binding proteins, it binds directly near the 3'-end of the 23S rRNA, where it nucleates assembly of the 50S subunit. This is Large ribosomal subunit protein uL3 from Pyrobaculum neutrophilum (strain DSM 2338 / JCM 9278 / NBRC 100436 / V24Sta) (Thermoproteus neutrophilus).